The primary structure comprises 150 residues: MAKKIIGSLKLQVKAGQANPSPPVGPALGQRGLNIMAFVKEFNAKSADLEPGTPTPVIITYYQDKSFSLELKTPPASFMLKKAAGLAPVGKRNRPKGSTKPGREVAGSVTVAQIRKIAEAKMKDLNANDVEAAMQIILGSAKSCGIEVKG.

This sequence belongs to the universal ribosomal protein uL11 family. In terms of assembly, part of the ribosomal stalk of the 50S ribosomal subunit. Interacts with L10 and the large rRNA to form the base of the stalk. L10 forms an elongated spine to which L12 dimers bind in a sequential fashion forming a multimeric L10(L12)X complex. In terms of processing, one or more lysine residues are methylated.

Its function is as follows. Forms part of the ribosomal stalk which helps the ribosome interact with GTP-bound translation factors. The protein is Large ribosomal subunit protein uL11 of Cereibacter sphaeroides (strain KD131 / KCTC 12085) (Rhodobacter sphaeroides).